Here is a 355-residue protein sequence, read N- to C-terminus: Arginine kinase (355 aa).

The Phosphagen kinase N-terminal domain occupies 6–90; that stretch reads TLEKLEAGFS…FDPIIEDYHN (85 aa). 63–67 provides a ligand contact to substrate; sequence GVGIY. The 238-residue stretch at 118 to 355 folds into the Phosphagen kinase C-terminal domain; sequence FVVSTRVRCG…AELIKIEKSL (238 aa). Residues 121–125 and His184 contribute to the ATP site; that span reads STRVR. Glu224 lines the substrate pocket. Arg228 contacts ATP. Cys270 lines the substrate pocket. Residues 279–283 and 308–313 contribute to the ATP site; these read RASVH and RGTRGE. Glu313 contacts substrate.

This sequence belongs to the ATP:guanido phosphotransferase family.

The catalysed reaction is L-arginine + ATP = N(omega)-phospho-L-arginine + ADP + H(+). This is Arginine kinase (ARGK) from Plodia interpunctella (Indianmeal moth).